A 514-amino-acid polypeptide reads, in one-letter code: Intracellular exo-alpha-L-arabinofuranosidase (514 aa).

Residues Glu-47 and Asn-194 each contribute to the alpha-L-arabinofuranose site. The Proton donor/acceptor role is filled by Glu-195. The alpha-L-arabinofuranose site is built by Tyr-261, Glu-317, and Gln-366. Glu-317 acts as the Nucleophile in catalysis.

The protein belongs to the glycosyl hydrolase 51 family. In terms of assembly, homohexamer; trimer of dimers.

It localises to the cytoplasm. It catalyses the reaction Hydrolysis of terminal non-reducing alpha-L-arabinofuranoside residues in alpha-L-arabinosides.. It functions in the pathway glycan metabolism; L-arabinan degradation. Functionally, involved in the degradation of arabinan and is a key enzyme in the complete degradation of the plant cell wall. Catalyzes the cleavage of terminal alpha-L-arabinofuranosyl residues in different hemicellulosic homopolysaccharides (branched and debranched arabinans) and heteropolysaccharides (arabinoxylans). This chain is Intracellular exo-alpha-L-arabinofuranosidase (asdII), found in Bacteroides ovatus.